Consider the following 221-residue polypeptide: Putative 5'(3')-deoxyribonucleotidase R824 (221 aa).

Asp-16 and Asp-18 together coordinate Mg(2+). The active-site Nucleophile is Asp-18. The phosphate site is built by Asp-18, Ser-103, and Lys-138. Asp-149 contacts Mg(2+).

This sequence belongs to the 5'(3')-deoxyribonucleotidase family. Mg(2+) is required as a cofactor.

Dephosphorylates the 5' and 2'(3')-phosphates of deoxyribonucleotides. This chain is Putative 5'(3')-deoxyribonucleotidase R824, found in Acanthamoeba polyphaga mimivirus (APMV).